A 240-amino-acid polypeptide reads, in one-letter code: Biosynthetic peptidoglycan transglycosylase (240 aa).

A helical membrane pass occupies residues 27–47 (VVLLFFFAVFALLLIFRFVPI).

The protein belongs to the glycosyltransferase 51 family.

Its subcellular location is the cell inner membrane. The enzyme catalyses [GlcNAc-(1-&gt;4)-Mur2Ac(oyl-L-Ala-gamma-D-Glu-L-Lys-D-Ala-D-Ala)](n)-di-trans,octa-cis-undecaprenyl diphosphate + beta-D-GlcNAc-(1-&gt;4)-Mur2Ac(oyl-L-Ala-gamma-D-Glu-L-Lys-D-Ala-D-Ala)-di-trans,octa-cis-undecaprenyl diphosphate = [GlcNAc-(1-&gt;4)-Mur2Ac(oyl-L-Ala-gamma-D-Glu-L-Lys-D-Ala-D-Ala)](n+1)-di-trans,octa-cis-undecaprenyl diphosphate + di-trans,octa-cis-undecaprenyl diphosphate + H(+). The protein operates within cell wall biogenesis; peptidoglycan biosynthesis. Its function is as follows. Peptidoglycan polymerase that catalyzes glycan chain elongation from lipid-linked precursors. This Haemophilus influenzae (strain PittEE) protein is Biosynthetic peptidoglycan transglycosylase.